Here is a 346-residue protein sequence, read N- to C-terminus: Phosphate acyltransferase (346 aa).

Belongs to the PlsX family. In terms of assembly, homodimer. Probably interacts with PlsY.

The protein resides in the cytoplasm. The catalysed reaction is a fatty acyl-[ACP] + phosphate = an acyl phosphate + holo-[ACP]. It functions in the pathway lipid metabolism; phospholipid metabolism. In terms of biological role, catalyzes the reversible formation of acyl-phosphate (acyl-PO(4)) from acyl-[acyl-carrier-protein] (acyl-ACP). This enzyme utilizes acyl-ACP as fatty acyl donor, but not acyl-CoA. This is Phosphate acyltransferase from Psychromonas ingrahamii (strain DSM 17664 / CCUG 51855 / 37).